A 101-amino-acid polypeptide reads, in one-letter code: Small ribosomal subunit protein uS14 (101 aa).

The span at 1 to 10 (MAKKSAIEKN) shows a compositional bias: basic and acidic residues. The segment at 1 to 23 (MAKKSAIEKNNRRKKMTKNAAPK) is disordered. The span at 11 to 23 (NRRKKMTKNAAPK) shows a compositional bias: basic residues.

In terms of assembly, part of the 30S ribosomal subunit. Contacts proteins S3 and S10.

Its function is as follows. Binds 16S rRNA, required for the assembly of 30S particles and may also be responsible for determining the conformation of the 16S rRNA at the A site. This Rhodopseudomonas palustris (strain ATCC BAA-98 / CGA009) protein is Small ribosomal subunit protein uS14.